The chain runs to 146 residues: 3-dehydroquinate dehydratase (146 aa).

Residue Tyr24 is the Proton acceptor of the active site. Substrate is bound by residues Asn73, His79, and Asp86. The active-site Proton donor is His99. Substrate contacts are provided by residues 100 to 101 and Arg110; that span reads LS.

This sequence belongs to the type-II 3-dehydroquinase family. In terms of assembly, homododecamer.

The enzyme catalyses 3-dehydroquinate = 3-dehydroshikimate + H2O. It participates in metabolic intermediate biosynthesis; chorismate biosynthesis; chorismate from D-erythrose 4-phosphate and phosphoenolpyruvate: step 3/7. Catalyzes a trans-dehydration via an enolate intermediate. The sequence is that of 3-dehydroquinate dehydratase from Shewanella baltica (strain OS195).